A 72-amino-acid polypeptide reads, in one-letter code: Translation initiation factor IF-1 (72 aa).

One can recognise an S1-like domain in the interval 1–72 (MAKEDVIEIE…TRGRITYRFK (72 aa)).

This sequence belongs to the IF-1 family. Component of the 30S ribosomal translation pre-initiation complex which assembles on the 30S ribosome in the order IF-2 and IF-3, IF-1 and N-formylmethionyl-tRNA(fMet); mRNA recruitment can occur at any time during PIC assembly.

The protein localises to the cytoplasm. Functionally, one of the essential components for the initiation of protein synthesis. Stabilizes the binding of IF-2 and IF-3 on the 30S subunit to which N-formylmethionyl-tRNA(fMet) subsequently binds. Helps modulate mRNA selection, yielding the 30S pre-initiation complex (PIC). Upon addition of the 50S ribosomal subunit IF-1, IF-2 and IF-3 are released leaving the mature 70S translation initiation complex. This Streptococcus suis (strain 05ZYH33) protein is Translation initiation factor IF-1.